A 542-amino-acid polypeptide reads, in one-letter code: Serine/threonine-protein phosphatase 2A regulatory subunit pptr-1 (542 aa).

Disordered stretches follow at residues 1–28 (MHGS…TGGQ) and 500–542 (DYLK…PAKK). Positions 528–542 (KKSSTGSETTTPAKK) are enriched in polar residues.

It belongs to the phosphatase 2A regulatory subunit B56 family. Part of a complex consisting of a common heterodimeric core enzyme, composed of catalytic subunit let-92 and constant regulatory subunit paa-1, that associates with a variety of regulatory subunits which confer distinct properties to the holoenzyme. Interacts with akt-1 but not akt-2. Interacts with sgk-1. Interacts with P granule components meg-1, meg-3 and meg-4. In terms of tissue distribution, expressed in pharynx, vulva and spermatheca.

Its subcellular location is the cytoplasm. In terms of biological role, probable regulatory subunit of serine/threonine-protein phosphatase let-92 which negatively regulates the insulin receptor signaling cascade composed of daf-2, age-1, akt-1, akt-2 and sgk-1 by promoting the dephosphorylation of akt-1 on 'Thr-350'. Negatively regulates several functions controlled by the insulin pathway including dauer formation, lifespan, fat storage and stress resistance. Plays a role in the asymmetric segregation of the P granule components during embryonic cell divisions but does not play an essential role in specifying germ cell fate. Within a PP2A phosphatase complex, acts redundantly with pptr-2, to dephosphorylate P granule components including meg-1 and meg-3 to promote the assembly and accumulation of zygotic P granules in the posterior cytoplasm during zygote polarization, and thus maintain P granule distribution and segregation in early stage embryos following meiosis. In adults, required to promote germ cell proliferation and differentiation when exposed to thermic stress. The protein is Serine/threonine-protein phosphatase 2A regulatory subunit pptr-1 of Caenorhabditis elegans.